A 378-amino-acid polypeptide reads, in one-letter code: Erythronate-4-phosphate dehydrogenase (378 aa).

Residues Ser-45 and Thr-66 each contribute to the substrate site. Positions 146 and 175 each coordinate NAD(+). Residue Arg-208 is part of the active site. Asp-232 serves as a coordination point for NAD(+). Glu-237 is a catalytic residue. The active-site Proton donor is the His-254. Gly-257 contacts NAD(+). A substrate-binding site is contributed by Tyr-258.

This sequence belongs to the D-isomer specific 2-hydroxyacid dehydrogenase family. PdxB subfamily. As to quaternary structure, homodimer.

The protein resides in the cytoplasm. The catalysed reaction is 4-phospho-D-erythronate + NAD(+) = (R)-3-hydroxy-2-oxo-4-phosphooxybutanoate + NADH + H(+). Its pathway is cofactor biosynthesis; pyridoxine 5'-phosphate biosynthesis; pyridoxine 5'-phosphate from D-erythrose 4-phosphate: step 2/5. In terms of biological role, catalyzes the oxidation of erythronate-4-phosphate to 3-hydroxy-2-oxo-4-phosphonooxybutanoate. In Escherichia coli O8 (strain IAI1), this protein is Erythronate-4-phosphate dehydrogenase.